Consider the following 405-residue polypeptide: Venom serine protease 34 (405 aa).

Positions 1–35 (MIFTNNIAAFQNVVLVKKVKIVLLIFYGSIMFSMT) are cleaved as a signal peptide. 2 disulfide bridges follow: C42/C70 and C95/C111. In terms of domain architecture, CUB spans 42-147 (CDYYQNLNLG…EVRPIKRVKD (106 aa)). N-linked (GlcNAc...) asparagine glycosylation occurs at N113. Residues 161–397 (IVGGTNTGIN…YIDWIVSQTP (237 aa)) form the Peptidase S1 domain. An intrachain disulfide couples C188 to C204. H203 serves as the catalytic Charge relay system. N-linked (GlcNAc...) asparagine glycosylation is found at N209 and N229. D257 acts as the Charge relay system in catalysis. 2 cysteine pairs are disulfide-bonded: C323–C336 and C345–C375. The Charge relay system role is filled by S349.

This sequence belongs to the peptidase S1 family. As to expression, expressed by the venom duct.

The protein resides in the secreted. The protein is Venom serine protease 34 of Apis mellifera (Honeybee).